A 647-amino-acid chain; its full sequence is Golgi-associated RAB2B interactor protein 3 (647 aa).

Polar residues predominate over residues 188-202; that stretch reads IPTADTSTETKSTLV. Disordered stretches follow at residues 188 to 220, 267 to 296, 361 to 384, and 465 to 573; these read IPTADTSTETKSTLVSEIHGEGDRDSKFQTSQD, TAGAAGATGAAGATGAAGSARAAGGAGSAR, SKSPGSGQVATGLTGTASKDQERS, and RDGS…GFVS. The span at 205–214 shows a compositional bias: basic and acidic residues; it reads IHGEGDRDSK. A compositionally biased stretch (polar residues) spans 361–378; it reads SKSPGSGQVATGLTGTAS. Serine 378 carries the post-translational modification Phosphoserine. Over residues 478-491 the composition is skewed to basic and acidic residues; sequence TQKEKRERRESDRK. Residues 492 to 501 show a composition bias toward basic residues; it reads GSRKSSHHQR. A Bipartite nuclear localization signal motif is present at residues 494-511; it reads RKSSHHQRTGASRHSSSK. Over residues 528-556 the composition is skewed to basic and acidic residues; that stretch reads KTREDKKEKGRGSLRDQRHSSSYRSESRT. 2 positions are modified to phosphoserine: serine 634 and serine 636.

Belongs to the GARIN family. As to quaternary structure, interacts (via N-terminus) with RAB2B (in GTP-bound form). Interacts with FRG1.

Its subcellular location is the golgi apparatus. It is found in the nucleus. It localises to the cajal body. In terms of biological role, may be involved in RNA biogenesis. This is Golgi-associated RAB2B interactor protein 3 (Garin3) from Rattus norvegicus (Rat).